The sequence spans 421 residues: Uracil permease (421 aa).

The next 12 helical transmembrane spans lie at isoleucine 18–leucine 38, isoleucine 41–cysteine 61, isoleucine 65–threonine 85, glutamate 89–valine 109, glycine 115–leucine 135, proline 160–phenylalanine 180, isoleucine 186–valine 206, isoleucine 232–valine 252, valine 304–glycine 324, leucine 329–isoleucine 349, isoleucine 371–phenylalanine 391, and methionine 393–isoleucine 413.

The protein belongs to the nucleobase:cation symporter-2 (NCS2) (TC 2.A.40) family.

It is found in the cell membrane. Its activity is regulated as follows. Inhibited by the proton gradient disruptor carbonyl cyanide m-chlorophenylhydrazone (CCCP), but not by the sodium gradient disruptor ouabain. Both xanthine and uric acid act as competitive inhibitors of uracil transport. In terms of biological role, specific for the uptake of uracil. Transport is probably proton-dependent. The protein is Uracil permease of Paenibacillus larvae subsp. larvae (strain NRRL B-3650 / LMG 16245).